Here is a 155-residue protein sequence, read N- to C-terminus: MVRAISDGIVISPIKNGTVIDHITPGEGLTVLRILGIRDGTNVTVIVASNVPSSRGGRKDMVKIENRELLKDEVDKIALVAPDATISIIRNFKVSVKKPVEVPKQIIGVIKCPNPNCITNTKEPVQSRFVVHPRGFRCQYCDSLISCEMDIGDYI.

Zn(2+) contacts are provided by Cys-112, Cys-117, Cys-138, and Cys-141.

This sequence belongs to the PyrI family. In terms of assembly, contains catalytic and regulatory chains. The cofactor is Zn(2+).

Functionally, involved in allosteric regulation of aspartate carbamoyltransferase. The chain is Aspartate carbamoyltransferase regulatory chain from Methanocorpusculum labreanum (strain ATCC 43576 / DSM 4855 / Z).